A 607-amino-acid chain; its full sequence is Nexilin (607 aa).

Residues 1 to 14 are compositionally biased toward basic and acidic residues; it reads MNDVSQKAEIKEML. 2 disordered regions span residues 1 to 143 and 165 to 268; these read MNDV…EDKM and ETEA…RRRI. S16 is subject to Phosphoserine. Composition is skewed to basic and acidic residues over residues 40–85, 120–143, 167–221, and 228–268; these read GKFD…RAEQ, KTKD…EDKM, EAKK…HMVN, and DRET…RRRI. At S172 the chain carries Phosphoserine. Phosphoserine is present on residues S281, S288, and S296. T301 is subject to Phosphothreonine. Disordered regions lie at residues 419–444 and 480–514; these read NFHE…KVNM and AALQ…GAPW. 2 positions are modified to phosphoserine: S495 and S500. T502 is modified (phosphothreonine). The region spanning 513-601 is the Ig-like domain; the sequence is PWFKKPLRNT…GSAASTCILT (89 aa).

In terms of assembly, interacts with F-actin.

It is found in the cytoplasm. The protein resides in the cytoskeleton. It localises to the cell junction. Its subcellular location is the adherens junction. The protein localises to the myofibril. It is found in the sarcomere. The protein resides in the z line. Its function is as follows. Involved in regulating cell migration through association with the actin cytoskeleton. Has an essential role in the maintenance of Z line and sarcomere integrity. The polypeptide is Nexilin (Mus musculus (Mouse)).